A 345-amino-acid chain; its full sequence is Anthranilate phosphoribosyltransferase (345 aa).

5-phospho-alpha-D-ribose 1-diphosphate contacts are provided by residues Gly79, 82-83, Thr87, 89-92, 106-114, and Ser118; these read GD, NVST, and KHGNRAVSG. Gly79 lines the anthranilate pocket. A Mg(2+)-binding site is contributed by Ser91. Position 109 (Asn109) interacts with anthranilate. Arg164 is a binding site for anthranilate. Mg(2+) contacts are provided by Asp223 and Glu224.

This sequence belongs to the anthranilate phosphoribosyltransferase family. In terms of assembly, homodimer. The cofactor is Mg(2+).

It carries out the reaction N-(5-phospho-beta-D-ribosyl)anthranilate + diphosphate = 5-phospho-alpha-D-ribose 1-diphosphate + anthranilate. It participates in amino-acid biosynthesis; L-tryptophan biosynthesis; L-tryptophan from chorismate: step 2/5. Catalyzes the transfer of the phosphoribosyl group of 5-phosphorylribose-1-pyrophosphate (PRPP) to anthranilate to yield N-(5'-phosphoribosyl)-anthranilate (PRA). This chain is Anthranilate phosphoribosyltransferase, found in Saccharolobus islandicus (strain L.S.2.15 / Lassen #1) (Sulfolobus islandicus).